Reading from the N-terminus, the 52-residue chain is Light-harvesting protein B800/830/1020 alpha-1 chain (52 aa).

The Cytoplasmic portion of the chain corresponds to 1-12 (MWRIWKVFDPRR). Residues 13–33 (ILIATAIWLIIIALTIHVILM) traverse the membrane as a helical segment. Position 29 (histidine 29) interacts with a bacteriochlorophyll. Residues 34 to 52 (TTERFNWLEGAPAAEYYSS) lie on the Periplasmic side of the membrane.

The protein belongs to the antenna complex alpha subunit family. As to quaternary structure, the core complex is formed by different alpha and beta chains, binding bacteriochlorophyll molecules, and arranged most probably in tetrameric structures disposed around the reaction center. The non-pigmented gamma chains may constitute additional components.

The protein localises to the cell inner membrane. Functionally, antenna complexes are light-harvesting systems, which transfer the excitation energy to the reaction centers. The sequence is that of Light-harvesting protein B800/830/1020 alpha-1 chain from Halorhodospira halochloris (Ectothiorhodospira halochloris).